Here is a 203-residue protein sequence, read N- to C-terminus: Linker for activation of T-cells family member 2 (203 aa).

Residues M1–E6 lie on the Extracellular side of the membrane. A helical; Signal-anchor for type III membrane protein membrane pass occupies residues L7–V27. 2 S-palmitoyl cysteine lipidation sites follow: C26 and C29. Residues H28–I203 are Cytoplasmic-facing. Position 59 is a phosphotyrosine (Y59). Phosphoserine occurs at positions 60 and 95. A phosphotyrosine mark is found at Y139, Y160, and Y192. The disordered stretch occupies residues E171–I203.

In terms of assembly, when phosphorylated, interacts with GRB2. May also interact with SOS1, GAB1 and CBL. In terms of processing, phosphorylated on tyrosines following cross-linking of BCR in B-cells, high affinity IgG receptor (FCGR1) in myeloid cells, or high affinity IgE receptor (FCER1) in mast cells; which induces the recruitment of GRB2. Strongly expressed in testis. Expressed in heart, spleen and lung. Present in B-cells and mast cells (at protein level).

It localises to the cell membrane. Functionally, involved in FCER1 (high affinity immunoglobulin epsilon receptor)-mediated signaling in mast cells. May also be involved in BCR (B-cell antigen receptor)-mediated signaling in B-cells and FCGR1 (high affinity immunoglobulin gamma Fc receptor I)-mediated signaling in myeloid cells. Couples activation of these receptors and their associated kinases with distal intracellular events through the recruitment of GRB2. In Mus musculus (Mouse), this protein is Linker for activation of T-cells family member 2 (Lat2).